The primary structure comprises 205 residues: Outer-membrane lipoprotein LolB (205 aa).

The signal sequence occupies residues 1–17; the sequence is MFLRHVIVFSLIALLTG. Cys18 is lipidated: N-palmitoyl cysteine. The S-diacylglycerol cysteine moiety is linked to residue Cys18.

It belongs to the LolB family. In terms of assembly, monomer.

Its subcellular location is the cell outer membrane. Its function is as follows. Plays a critical role in the incorporation of lipoproteins in the outer membrane after they are released by the LolA protein. The sequence is that of Outer-membrane lipoprotein LolB from Pseudomonas savastanoi pv. phaseolicola (strain 1448A / Race 6) (Pseudomonas syringae pv. phaseolicola (strain 1448A / Race 6)).